A 112-amino-acid polypeptide reads, in one-letter code: DNA-binding protein TK1278 (112 aa).

The protein belongs to the PDCD5 family.

This is DNA-binding protein TK1278 from Thermococcus kodakarensis (strain ATCC BAA-918 / JCM 12380 / KOD1) (Pyrococcus kodakaraensis (strain KOD1)).